A 1146-amino-acid chain; its full sequence is Integrin alpha-PS1 (1146 aa).

The N-terminal stretch at 1 to 30 (MLELPFTTIRPNCRLRQNLGILIILQCVLT) is a signal peptide. Over 31 to 1085 (CYNFNLEQRL…NQQRDTSIPW (1055 aa)) the chain is Extracellular. FG-GAP repeat units lie at residues 38 to 105 (QRLP…FDDC), 121 to 186 (LSPP…FEEV), 193 to 245 (RPVQ…YLQR), 254 to 303 (HSDL…KSTD), 304 to 366 (NPIP…TLPM), 367 to 422 (KYTL…GLNS), and 432 to 494 (ELGG…RKEL). N-linked (GlcNAc...) asparagine glycans are attached at residues Asn68, Asn86, and Asn147. 8 N-linked (GlcNAc...) asparagine glycosylation sites follow: Asn470, Asn511, Asn657, Asn680, Asn711, Asn718, Asn761, and Asn928. A disordered region spans residues 938–958 (YYSSSHRDDHSDDTQSNRNRV). The segment covering 942–952 (SHRDDHSDDTQ) has biased composition (basic and acidic residues). An N-linked (GlcNAc...) asparagine glycan is attached at Asn1027. A helical membrane pass occupies residues 1086-1106 (LIIILGIVGGLLLLALVTYVL). Residues 1107–1146 (WKVGFFKRIRPTDPTLSGNLEKMNEEKPFLAPSKNTHHVF) lie on the Cytoplasmic side of the membrane.

This sequence belongs to the integrin alpha chain family. As to quaternary structure, heterodimer of an alpha and a beta subunit. The alpha subunit is composed of a heavy and a light chain linked by a disulfide bond. Alpha-PS1 associates with beta-PS. Expressed in follicle cells (at protein level). At syncytial blastoderm stage, expressed in the ectoderm but not in the mesodermal precursors. At embryonic stage 7, expressed in dorsal and ventrolateral ectoderm and in some yolk nuclei. At late stage 10, expression is homogeneous in the ectoderm and is particularly abundant in the anterior and posterior midgut primordia. At stage 11, strongly expressed in a metameric pattern in the ectoderm, in the proctodeum and in the posterior midgut primordium. At stage 12, accumulates at the segment boundaries that start to become morphologically visible, similar expression pattern is observed in the central nervous system. In third larval instar wing imaginal disk, strongly expressed in the dorsal compartment, in the adepithelial cells and in patches on the peripodial membrane covering the imaginal disk to the outside.

The protein localises to the apical cell membrane. It localises to the lateral cell membrane. It is found in the basal cell membrane. Its function is as follows. Integrin alpha-PS1/beta-PS is a receptor for laminin. The chain is Integrin alpha-PS1 (mew) from Drosophila melanogaster (Fruit fly).